The primary structure comprises 61 residues: Large ribosomal subunit protein bL32 (61 aa).

The segment covering 1 to 18 (MAIVPKRKTSKQRKRKRQ) has biased composition (basic residues). The tract at residues 1–20 (MAIVPKRKTSKQRKRKRQTH) is disordered.

The protein belongs to the bacterial ribosomal protein bL32 family.

The chain is Large ribosomal subunit protein bL32 (rpmF) from Mycoplasmopsis pulmonis (strain UAB CTIP) (Mycoplasma pulmonis).